The sequence spans 265 residues: Isoprenyl transferase 1 (265 aa).

Asp-43 is an active-site residue. Asp-43 contacts Mg(2+). Substrate-binding positions include 44 to 47, Trp-48, His-61, and 89 to 91; these read GNRR and STE. Asn-92 acts as the Proton acceptor in catalysis. Substrate contacts are provided by residues Arg-95, Arg-214, and 220–222; that span reads RLS. Position 233 (Glu-233) interacts with Mg(2+).

It belongs to the UPP synthase family. As to quaternary structure, homodimer. Requires Mg(2+) as cofactor.

Catalyzes the condensation of isopentenyl diphosphate (IPP) with allylic pyrophosphates generating different type of terpenoids. The protein is Isoprenyl transferase 1 of Corynebacterium diphtheriae (strain ATCC 700971 / NCTC 13129 / Biotype gravis).